The following is a 166-amino-acid chain: Putative universal stress protein SA1532 (166 aa).

It belongs to the universal stress protein A family.

Its subcellular location is the cytoplasm. The protein is Putative universal stress protein SA1532 of Staphylococcus aureus (strain N315).